Reading from the N-terminus, the 175-residue chain is Adenine phosphoribosyltransferase (175 aa).

The protein belongs to the purine/pyrimidine phosphoribosyltransferase family. In terms of assembly, homodimer.

Its subcellular location is the cytoplasm. The enzyme catalyses AMP + diphosphate = 5-phospho-alpha-D-ribose 1-diphosphate + adenine. The protein operates within purine metabolism; AMP biosynthesis via salvage pathway; AMP from adenine: step 1/1. Its function is as follows. Catalyzes a salvage reaction resulting in the formation of AMP, that is energically less costly than de novo synthesis. In Maricaulis maris (strain MCS10) (Caulobacter maris), this protein is Adenine phosphoribosyltransferase.